We begin with the raw amino-acid sequence, 1944 residues long: Anaphase-promoting complex subunit 1 (1944 aa).

Phosphoserine occurs at positions 51, 60, 202, and 286. At Thr-291 the chain carries Phosphothreonine. The interval 305–343 is disordered; it reads LRSLSKGDSPVTSPFQNYSSIHSQSRSTSSPSLHSRSPS. A phosphoserine mark is found at Ser-313, Ser-341, Ser-343, Ser-355, Ser-362, Ser-373, and Ser-377. A compositionally biased stretch (low complexity) spans 323 to 343; the sequence is SSIHSQSRSTSSPSLHSRSPS. Residues 373-396 form a disordered region; it reads SHNQSPKRHSISHSPNSNSNGSFL. Residues 384-394 show a composition bias toward low complexity; that stretch reads SHSPNSNSNGS. Thr-537 is subject to Phosphothreonine. Phosphoserine occurs at positions 547 and 555. Phosphotyrosine is present on Tyr-571. 3 positions are modified to phosphoserine: Ser-686, Ser-688, and Ser-916. The tract at residues 994 to 1016 is disordered; sequence KGKSVLSSDVPSGTETEEEDDGM. Positions 998 to 1007 are enriched in polar residues; it reads VLSSDVPSGT. PC repeat units lie at residues 1297–1325, 1366–1404, 1467–1501, and 1520–1552; these read AAGL…PEQL, GATL…PEFL, GACL…YLSA, and LLSL…EMNY.

This sequence belongs to the APC1 family. In terms of assembly, the mammalian APC/C is composed at least of 14 distinct subunits ANAPC1, ANAPC2, CDC27/APC3, ANAPC4, ANAPC5, CDC16/APC6, ANAPC7, CDC23/APC8, ANAPC10, ANAPC11, CDC26/APC12, ANAPC13, ANAPC15 and ANAPC16 that assemble into a complex of at least 19 chains with a combined molecular mass of around 1.2 MDa; APC/C interacts with FZR1 and FBXO5. Post-translationally, phosphorylated. Phosphorylation on Ser-355 occurs specifically during mitosis.

The protein operates within protein modification; protein ubiquitination. Its function is as follows. Component of the anaphase promoting complex/cyclosome (APC/C), a cell cycle-regulated E3 ubiquitin ligase that controls progression through mitosis and the G1 phase of the cell cycle. The APC/C complex acts by mediating ubiquitination and subsequent degradation of target proteins: it mainly mediates the formation of 'Lys-11'-linked polyubiquitin chains and, to a lower extent, the formation of 'Lys-48'- and 'Lys-63'-linked polyubiquitin chains. The APC/C complex catalyzes assembly of branched 'Lys-11'-/'Lys-48'-linked branched ubiquitin chains on target proteins. The protein is Anaphase-promoting complex subunit 1 (ANAPC1) of Homo sapiens (Human).